The sequence spans 1201 residues: DNA-directed RNA polymerase subunit beta' (1201 aa).

Zn(2+) is bound by residues cysteine 60, cysteine 62, cysteine 75, and cysteine 78. Mg(2+) is bound by residues aspartate 449, aspartate 451, and aspartate 453. Positions 818, 892, 899, and 902 each coordinate Zn(2+).

Belongs to the RNA polymerase beta' chain family. As to quaternary structure, the RNAP catalytic core consists of 2 alpha, 1 beta, 1 beta' and 1 omega subunit. When a sigma factor is associated with the core the holoenzyme is formed, which can initiate transcription. The cofactor is Mg(2+). Zn(2+) serves as cofactor.

The catalysed reaction is RNA(n) + a ribonucleoside 5'-triphosphate = RNA(n+1) + diphosphate. Its function is as follows. DNA-dependent RNA polymerase catalyzes the transcription of DNA into RNA using the four ribonucleoside triphosphates as substrates. This is DNA-directed RNA polymerase subunit beta' from Listeria monocytogenes serovar 1/2a (strain ATCC BAA-679 / EGD-e).